The sequence spans 201 residues: Protease (201 aa).

Active-site residues include histidine 56, aspartate 73, and cysteine 121.

Belongs to the peptidase C5 family. In terms of assembly, interacts with protease cofactor pVI-C; this interaction is necessary for protease activation.

Its subcellular location is the virion. The protein localises to the host nucleus. The catalysed reaction is Cleaves proteins of the adenovirus and its host cell at two consensus sites: -Yaa-Xaa-Gly-Gly-|-Xaa- and -Yaa-Xaa-Gly-Xaa-|-Gly- (in which Yaa is Met, Ile or Leu, and Xaa is any amino acid).. Requires DNA and protease cofactor for maximal activation. Inside nascent virions, becomes partially activated by binding to the viral DNA, allowing it to cleave the cofactor that binds to the protease and fully activates it. Actin, like the viral protease cofactor, seems to act as a cofactor in the cleavage of cytokeratin 18 and of actin itself. Cleaves viral precursor proteins (pTP, pIIIa, pVI, pVII, pVIII, and pX) inside newly assembled particles giving rise to mature virions. Protease complexed to its cofactor slides along the viral DNA to specifically locate and cleave the viral precursors. Mature virions have a weakened organization compared to the unmature virions, thereby facilitating subsequent uncoating. Without maturation, the particle lacks infectivity and is unable to uncoat. Late in adenovirus infection, in the cytoplasm, may participate in the cytoskeleton destruction. Cleaves host cell cytoskeletal keratins K7 and K18. The polypeptide is Protease (Homo sapiens (Human)).